We begin with the raw amino-acid sequence, 227 residues long: Phosphatidate cytidylyltransferase (227 aa).

The next 6 membrane-spanning stretches (helical) occupy residues 31-51, 65-85, 93-113, 131-151, 165-185, and 206-226; these read FVIAILWFKPLFYILMILVGM, IPYLLIGLIIIPIPISLLTFL, WLIMLYFCIIWSVDSFAMIGG, WSGLVTGVLSAGLVAVLASFI, IYLFIISCILALIAQSSDLFI, and GVLDRFDSIILTAPVLFFISI.

Belongs to the CDS family.

The protein localises to the cell membrane. It carries out the reaction a 1,2-diacyl-sn-glycero-3-phosphate + CTP + H(+) = a CDP-1,2-diacyl-sn-glycerol + diphosphate. It functions in the pathway phospholipid metabolism; CDP-diacylglycerol biosynthesis; CDP-diacylglycerol from sn-glycerol 3-phosphate: step 3/3. In Rickettsia felis (strain ATCC VR-1525 / URRWXCal2) (Rickettsia azadi), this protein is Phosphatidate cytidylyltransferase (cdsA).